Consider the following 453-residue polypeptide: UDP-N-acetylmuramoylalanine--D-glutamate ligase (453 aa).

117-123 (GSNGKST) is a binding site for ATP.

The protein belongs to the MurCDEF family.

The protein localises to the cytoplasm. It catalyses the reaction UDP-N-acetyl-alpha-D-muramoyl-L-alanine + D-glutamate + ATP = UDP-N-acetyl-alpha-D-muramoyl-L-alanyl-D-glutamate + ADP + phosphate + H(+). It participates in cell wall biogenesis; peptidoglycan biosynthesis. In terms of biological role, cell wall formation. Catalyzes the addition of glutamate to the nucleotide precursor UDP-N-acetylmuramoyl-L-alanine (UMA). The protein is UDP-N-acetylmuramoylalanine--D-glutamate ligase of Chromobacterium violaceum (strain ATCC 12472 / DSM 30191 / JCM 1249 / CCUG 213 / NBRC 12614 / NCIMB 9131 / NCTC 9757 / MK).